The chain runs to 211 residues: uncharacterized protein (211 aa).

Disordered regions lie at residues 1 to 73 and 96 to 123; these read MLRR…SKLK and TNAAKEEKLRMAPSPTQSTRSESDASLS. Polar residues-rich tracts occupy residues 26 to 35 and 53 to 62; these read SKSSLISLTS and APSQFLSPTN. The span at 63–73 shows a compositional bias: low complexity; it reads KRSTSSQSKLK. Residue Ser182 is modified to Phosphoserine. Thr184 carries the phosphothreonine modification. Ser186 bears the Phosphoserine mark.

This is an uncharacterized protein from Saccharomyces cerevisiae (strain ATCC 204508 / S288c) (Baker's yeast).